We begin with the raw amino-acid sequence, 473 residues long: Ornithine decarboxylase (473 aa).

Lysine 106 bears the N6-(pyridoxal phosphate)lysine mark. Pyridoxal 5'-phosphate-binding positions include serine 240, glycine 277, and 313–316 (EPGR). 367–368 (FD) lines the substrate pocket. Cysteine 417 acts as the Proton donor; shared with dimeric partner in catalysis. Aspartate 418 contributes to the substrate binding site. Residue tyrosine 447 coordinates pyridoxal 5'-phosphate.

It belongs to the Orn/Lys/Arg decarboxylase class-II family. In terms of assembly, homodimer. Only the dimer is catalytically active, as the active sites are constructed of residues from both monomers. Pyridoxal 5'-phosphate serves as cofactor.

The protein localises to the cytoplasm. The catalysed reaction is L-ornithine + H(+) = putrescine + CO2. The protein operates within amine and polyamine biosynthesis; putrescine biosynthesis via L-ornithine pathway; putrescine from L-ornithine: step 1/1. With respect to regulation, inhibited by antizyme (AZ) OAZ1 in response to polyamine levels. AZ inhibits the assembly of the functional homodimer by binding to ODC monomers and targeting them for ubiquitin-independent proteolytic destruction by the 26S proteasome. Functionally, catalyzes the first and rate-limiting step of polyamine biosynthesis that converts ornithine into putrescine, which is the precursor for the polyamines, spermidine and spermine. Polyamines are essential for cell proliferation and are implicated in cellular processes, ranging from DNA replication to apoptosis. The chain is Ornithine decarboxylase (SPE1) from Candida albicans (strain SC5314 / ATCC MYA-2876) (Yeast).